We begin with the raw amino-acid sequence, 248 residues long: Segregation and condensation protein A (248 aa).

The protein belongs to the ScpA family. In terms of assembly, component of a cohesin-like complex composed of ScpA, ScpB and the Smc homodimer, in which ScpA and ScpB bind to the head domain of Smc. The presence of the three proteins is required for the association of the complex with DNA.

It localises to the cytoplasm. Its function is as follows. Participates in chromosomal partition during cell division. May act via the formation of a condensin-like complex containing Smc and ScpB that pull DNA away from mid-cell into both cell halves. In Bacillus cytotoxicus (strain DSM 22905 / CIP 110041 / 391-98 / NVH 391-98), this protein is Segregation and condensation protein A.